The following is a 191-amino-acid chain: Small ribosomal subunit protein eS7 (191 aa).

Belongs to the eukaryotic ribosomal protein eS7 family.

This is Small ribosomal subunit protein eS7 (RPS7) from Hordeum vulgare (Barley).